The sequence spans 180 residues: Large ribosomal subunit protein uL6 (180 aa).

This sequence belongs to the universal ribosomal protein uL6 family. In terms of assembly, part of the 50S ribosomal subunit.

This protein binds to the 23S rRNA, and is important in its secondary structure. It is located near the subunit interface in the base of the L7/L12 stalk, and near the tRNA binding site of the peptidyltransferase center. This is Large ribosomal subunit protein uL6 from Borrelia turicatae (strain 91E135).